Consider the following 98-residue polypeptide: Putative septation protein SpoVG (98 aa).

This sequence belongs to the SpoVG family.

Functionally, could be involved in septation. The chain is Putative septation protein SpoVG from Alkaliphilus metalliredigens (strain QYMF).